Here is a 619-residue protein sequence, read N- to C-terminus: Dihydroxy-acid dehydratase (619 aa).

Residue aspartate 81 coordinates Mg(2+). Residue cysteine 122 coordinates [2Fe-2S] cluster. Residues aspartate 123 and lysine 124 each coordinate Mg(2+). The residue at position 124 (lysine 124) is an N6-carboxylysine. Cysteine 198 provides a ligand contact to [2Fe-2S] cluster. Glutamate 494 lines the Mg(2+) pocket. Catalysis depends on serine 520, which acts as the Proton acceptor.

The protein belongs to the IlvD/Edd family. In terms of assembly, homodimer. [2Fe-2S] cluster is required as a cofactor. It depends on Mg(2+) as a cofactor.

The catalysed reaction is (2R)-2,3-dihydroxy-3-methylbutanoate = 3-methyl-2-oxobutanoate + H2O. It carries out the reaction (2R,3R)-2,3-dihydroxy-3-methylpentanoate = (S)-3-methyl-2-oxopentanoate + H2O. It functions in the pathway amino-acid biosynthesis; L-isoleucine biosynthesis; L-isoleucine from 2-oxobutanoate: step 3/4. Its pathway is amino-acid biosynthesis; L-valine biosynthesis; L-valine from pyruvate: step 3/4. Its function is as follows. Functions in the biosynthesis of branched-chain amino acids. Catalyzes the dehydration of (2R,3R)-2,3-dihydroxy-3-methylpentanoate (2,3-dihydroxy-3-methylvalerate) into 2-oxo-3-methylpentanoate (2-oxo-3-methylvalerate) and of (2R)-2,3-dihydroxy-3-methylbutanoate (2,3-dihydroxyisovalerate) into 2-oxo-3-methylbutanoate (2-oxoisovalerate), the penultimate precursor to L-isoleucine and L-valine, respectively. The sequence is that of Dihydroxy-acid dehydratase from Neisseria gonorrhoeae (strain ATCC 700825 / FA 1090).